The following is a 151-amino-acid chain: Myosin catalytic light chain, smooth muscle (151 aa).

At Ala1 the chain carries N-acetylalanine. EF-hand domains lie at 6–41 (DRITECQEAFELFDRSAEGKVFLGQVGDILRALGQN), 83–118 (GSYEDFVEGLRVFDKENNGKIMGAELRHVLSTLGEK), and 119–151 (MSEEEVEESLLQGQQDPNGCIHYEEFSKYLLEG).

Functionally, in molluscan muscle, calcium regulation is associated with myosin rather than with actin. Muscle myosin contains two types of light chains: the catalytic light chain, essential for ATPase activity, and the regulatory light chain, a calcium-binding protein responsible for Ca(2+) dependent binding and Ca(2+) dependent Mg-ATPase activity. In Halocynthia roretzi (Sea squirt), this protein is Myosin catalytic light chain, smooth muscle.